Reading from the N-terminus, the 89-residue chain is Small ribosomal subunit protein uS14 (89 aa).

Belongs to the universal ribosomal protein uS14 family. Part of the 30S ribosomal subunit. Contacts proteins S3 and S10.

In terms of biological role, binds 16S rRNA, required for the assembly of 30S particles and may also be responsible for determining the conformation of the 16S rRNA at the A site. In Leuconostoc citreum (strain KM20), this protein is Small ribosomal subunit protein uS14.